Consider the following 432-residue polypeptide: RNA binding protein fox-1 homolog 2 (432 aa).

Positions 1-21 (MAEGGQAQQQPPQLGPGAAAR) are enriched in low complexity. The interval 1-169 (MAEGGQAQQQ…STPKRLHVSN (169 aa)) is disordered. 2 stretches are compositionally biased toward polar residues: residues 60–69 (QGNQEPTTTP) and 101–121 (YAGQ…PHGE). Positions 122–159 (QSSNSPSNQNGSLTQTEGGAQTDGQQSQTQSSENSESK) are enriched in low complexity. An RRM domain is found at 163 to 239 (KRLHVSNIPF…RKIEVNNATA (77 aa)). Residue R323 is modified to Omega-N-methylarginine. 2 positions are modified to asymmetric dimethylarginine: R339 and R371. Asymmetric dimethylarginine; alternate occurs at positions 423 and 428. R423 and R428 each carry omega-N-methylarginine; alternate.

In terms of assembly, interacts with ER-alpha N-terminal activation domain. Interacts with RBPMS; the interaction allows cooperative assembly of stable cell-specific alternative splicing regulatory complexes.

It localises to the nucleus. Its subcellular location is the cytoplasm. In terms of biological role, RNA-binding protein that regulates alternative splicing events by binding to 5'-UGCAUGU-3' elements. Prevents binding of U2AF2 to the 3'-splice site. Regulates alternative splicing of tissue-specific exons and of differentially spliced exons during erythropoiesis. Seems to act as a coregulatory factor of ER-alpha. Together with RNA binding proteins RBPMS and MBNL1/2, activates vascular smooth muscle cells alternative splicing events. The polypeptide is RNA binding protein fox-1 homolog 2 (Rbfox2) (Rattus norvegicus (Rat)).